The sequence spans 72 residues: UPF0352 protein HI_0840 (72 aa).

The protein belongs to the UPF0352 family.

The sequence is that of UPF0352 protein HI_0840 from Haemophilus influenzae (strain ATCC 51907 / DSM 11121 / KW20 / Rd).